The following is a 407-amino-acid chain: 12S rRNA N(4)-cytidine methyltransferase METTL15 (407 aa).

S-adenosyl-L-methionine contacts are provided by residues 100 to 102 (GGH), aspartate 119, phenylalanine 146, aspartate 169, and glutamine 176. The residue at position 358 (serine 358) is a Phosphoserine.

It belongs to the methyltransferase superfamily. RsmH family.

It localises to the mitochondrion matrix. It catalyses the reaction cytidine(839) in 12S rRNA + S-adenosyl-L-methionine = N(4)-methylcytidine(839) in 12S rRNA + S-adenosyl-L-homocysteine + H(+). Its function is as follows. N4-methylcytidine (m4C) methyltransferase responsible for the methylation of position C839 in mitochondrial 12S rRNA. Involved in the stabilization of 12S rRNA folding, therefore facilitating the assembly of the mitochondrial small ribosomal subunits. This is 12S rRNA N(4)-cytidine methyltransferase METTL15 from Homo sapiens (Human).